The primary structure comprises 607 residues: Tyrosine-protein kinase RYK (607 aa).

Residues 1–20 (MRGAARLGRPGRSCLPGARG) form a disordered region. The first 25 residues, 1-25 (MRGAARLGRPGRSCLPGARGLRAPP), serve as a signal peptide directing secretion. Over 26–227 (PPPLLLLLAL…VHAAPTTSTR (202 aa)) the chain is Extracellular. In terms of domain architecture, WIF spans 66 to 194 (LYLSEDEVRR…VLNFKRRKMC (129 aa)). N-linked (GlcNAc...) asparagine glycosylation is found at Asn-139, Asn-174, Asn-178, Asn-182, and Asn-209. Cys-159 and Cys-194 are disulfide-bonded. The chain crosses the membrane as a helical span at residues 228-248 (VFYISVGVCCAVIFLVAIILA). Topologically, residues 249–607 (VLHLHSMKRI…EFHAALGAYV (359 aa)) are cytoplasmic. Low complexity predominate over residues 266 to 282 (ASSSSQGLSQPSTQTTQ). A disordered region spans residues 266–290 (ASSSSQGLSQPSTQTTQYLRADTPN). The Protein kinase domain occupies 330–603 (ITLKDVLQEG…QCLTEFHAAL (274 aa)). ATP is bound by residues 336–344 (LQEGTFGRI) and Lys-364. The active-site Proton acceptor is the Asp-465. At Tyr-495 the chain carries Phosphotyrosine; by autocatalysis.

Belongs to the protein kinase superfamily. Tyr protein kinase family. As to quaternary structure, interacts with DVL1 (via PDZ domain). Proteolytically cleaved, in part by presenilin, in response to WNT3 stimulation. Cleavage occurs during neuronal differentiation. In terms of tissue distribution, observed in all the tissues examined.

Its subcellular location is the membrane. It is found in the nucleus. The protein resides in the cytoplasm. It catalyses the reaction L-tyrosyl-[protein] + ATP = O-phospho-L-tyrosyl-[protein] + ADP + H(+). Its function is as follows. May be a coreceptor along with FZD8 of Wnt proteins, such as WNT1, WNT3, WNT3A and WNT5A. Involved in neuron differentiation, axon guidance, corpus callosum establishment and neurite outgrowth. In response to WNT3 stimulation, receptor C-terminal cleavage occurs in its transmembrane region and allows the C-terminal intracellular product to translocate from the cytoplasm to the nucleus where it plays a crucial role in neuronal development. This Homo sapiens (Human) protein is Tyrosine-protein kinase RYK.